Here is a 181-residue protein sequence, read N- to C-terminus: HGPRTase-like protein 2 (181 aa).

Belongs to the purine/pyrimidine phosphoribosyltransferase family. Archaeal HPRT subfamily.

In terms of biological role, may catalyze a purine salvage reaction, the substrate is unknown. The polypeptide is HGPRTase-like protein 2 (Haloterrigena turkmenica (strain ATCC 51198 / DSM 5511 / JCM 9101 / NCIMB 13204 / VKM B-1734 / 4k) (Halococcus turkmenicus)).